Here is a 343-residue protein sequence, read N- to C-terminus: Ferrochelatase (343 aa).

Residues histidine 191 and glutamate 270 each coordinate Fe cation.

Belongs to the ferrochelatase family.

It is found in the cytoplasm. The enzyme catalyses heme b + 2 H(+) = protoporphyrin IX + Fe(2+). The protein operates within porphyrin-containing compound metabolism; protoheme biosynthesis; protoheme from protoporphyrin-IX: step 1/1. Catalyzes the ferrous insertion into protoporphyrin IX. The polypeptide is Ferrochelatase (Phenylobacterium zucineum (strain HLK1)).